Consider the following 160-residue polypeptide: Ribosomal RNA large subunit methyltransferase H (160 aa).

S-adenosyl-L-methionine-binding positions include Leu-76, Gly-108, and Leu-127 to Trp-132.

Belongs to the RNA methyltransferase RlmH family. As to quaternary structure, homodimer.

Its subcellular location is the cytoplasm. The enzyme catalyses pseudouridine(1915) in 23S rRNA + S-adenosyl-L-methionine = N(3)-methylpseudouridine(1915) in 23S rRNA + S-adenosyl-L-homocysteine + H(+). Functionally, specifically methylates the pseudouridine at position 1915 (m3Psi1915) in 23S rRNA. The sequence is that of Ribosomal RNA large subunit methyltransferase H from Rhizobium etli (strain CIAT 652).